The chain runs to 829 residues: Periplasmic nitrate reductase (829 aa).

The segment at residues 1-31 (MKLSRRDFMKANAVAAAAAAAGLTIPTVARA) is a signal peptide (tat-type signal). The region spanning 40-96 (ITWDKAPCRFCGTGCGVLVGTQNGRIVASQGDPDAPVNRGLNCIKGYFLPKIMYGKD) is the 4Fe-4S Mo/W bis-MGD-type domain. 4 residues coordinate [4Fe-4S] cluster: C47, C50, C54, and C82. Residues K84, Q151, N176, C180, 213 to 220 (WGSNMAEM), 263 to 265 (QSD), M373, Q377, N483, 509 to 510 (SD), K532, D559, and 719 to 728 (TGRVLEHWHT) contribute to the Mo-bis(molybdopterin guanine dinucleotide) site. Position 795 (F795) interacts with substrate. Mo-bis(molybdopterin guanine dinucleotide)-binding residues include N803 and K820.

This sequence belongs to the prokaryotic molybdopterin-containing oxidoreductase family. NasA/NapA/NarB subfamily. Component of the periplasmic nitrate reductase NapAB complex composed of NapA and NapB. [4Fe-4S] cluster is required as a cofactor. Mo-bis(molybdopterin guanine dinucleotide) serves as cofactor. Predicted to be exported by the Tat system. The position of the signal peptide cleavage has not been experimentally proven.

Its subcellular location is the periplasm. It carries out the reaction 2 Fe(II)-[cytochrome] + nitrate + 2 H(+) = 2 Fe(III)-[cytochrome] + nitrite + H2O. Catalytic subunit of the periplasmic nitrate reductase complex NapAB. Receives electrons from NapB and catalyzes the reduction of nitrate to nitrite. The protein is Periplasmic nitrate reductase of Edwardsiella ictaluri (strain 93-146).